The primary structure comprises 271 residues: Elongation factor Ts (271 aa).

Residues 76–79 (TDFV) form an involved in Mg(2+) ion dislocation from EF-Tu region.

This sequence belongs to the EF-Ts family.

Its subcellular location is the cytoplasm. In terms of biological role, associates with the EF-Tu.GDP complex and induces the exchange of GDP to GTP. It remains bound to the aminoacyl-tRNA.EF-Tu.GTP complex up to the GTP hydrolysis stage on the ribosome. In Mycobacterium tuberculosis (strain ATCC 25177 / H37Ra), this protein is Elongation factor Ts.